A 484-amino-acid chain; its full sequence is MAKITTSMIQEILTAIGGKSNVIKCGNCMTRLRLTLHDDNLADRDTIKRIAGVMGLVESDDQFQIVLGPGKAQTAAEMMNEMMEGEEDNSASTTAESRDLKDVASEHKQKLKKKQTSAAQRFLSKFATIFTPLIPGFIAAGLLLGFATLLDQIYIIGNESPNANLVDLILYMKVFSKGLFSFLSILIGYNAQQAFGGSGVNGAILASLFVLGYNPDATSGIYSGMTDFFGHGIDPRGNIIGVLIAAIIGAGVEKKVRQYMPDNLDMILTSVVTLLIMGAVTFVVIMPIGGVLFQGMSWLFMNLNGNPIGSAILAGLFLISVMFGIHQGFVPVYFALMDAQGFNSLFPILAMAGAGQVGAALALYAKANKDALLRTQVKGSIIPGFLGIGEPLIYGVTLPRVKPFITACVGGAAGGFFIGLVSYMGLPVGLNTVFGPSGIVALPLMTSNAGIFAGMLVFAAGLVISYVAGFLATWFFGTKNVDLS.

Positions methionine 1 to asparagine 89 constitute a PTS EIIB type-1 domain. The active-site Phosphocysteine intermediate; for EIIB activity is the cysteine 28. A disordered region spans residues methionine 83–glutamate 106. Positions glutamate 96–glutamate 106 are enriched in basic and acidic residues. One can recognise a PTS EIIC type-1 domain in the interval serine 124–serine 484. The next 10 membrane-spanning stretches (helical) occupy residues phenylalanine 126–phenylalanine 146, leucine 168–glycine 188, alanine 194–asparagine 214, glycine 232–valine 252, threonine 273–phenylalanine 293, isoleucine 312–valine 332, leucine 345–alanine 365, glycine 379–proline 399, phenylalanine 404–methionine 424, and isoleucine 451–leucine 471.

The protein resides in the cell inner membrane. It catalyses the reaction N-acetyl-beta-D-muramate(out) + N(pros)-phospho-L-histidyl-[protein] = N-acetyl-beta-D-muramate 6-phosphate(in) + L-histidyl-[protein]. Functionally, the phosphoenolpyruvate-dependent sugar phosphotransferase system (sugar PTS), a major carbohydrate active transport system, catalyzes the phosphorylation of incoming sugar substrates concomitantly with their translocation across the cell membrane. This system is involved in N-acetylmuramic acid (MurNAc) transport, yielding cytoplasmic MurNAc-6-P. Is also able to take up anhydro-N-acetylmuramic acid (anhMurNAc), but cannot phosphorylate the carbon 6, probably because of the 1,6-anhydro ring. The protein is PTS system N-acetylmuramic acid-specific EIIBC component (murP) of Aliivibrio fischeri (strain ATCC 700601 / ES114) (Vibrio fischeri).